We begin with the raw amino-acid sequence, 155 residues long: Ribonuclease H (155 aa).

One can recognise an RNase H type-1 domain in the interval 1–142; that stretch reads MLKQVEIFTD…CDELARAAAM (142 aa). Mg(2+) is bound by residues D10, E48, D70, and D134.

It belongs to the RNase H family. Monomer. Requires Mg(2+) as cofactor.

The protein localises to the cytoplasm. The enzyme catalyses Endonucleolytic cleavage to 5'-phosphomonoester.. Endonuclease that specifically degrades the RNA of RNA-DNA hybrids. In Escherichia coli O127:H6 (strain E2348/69 / EPEC), this protein is Ribonuclease H.